The following is a 39-amino-acid chain: Potassium channel toxin alpha-KTx 2.16 (39 aa).

Intrachain disulfides connect cysteine 7-cysteine 29, cysteine 13-cysteine 34, and cysteine 17-cysteine 36. Isoleucine amide is present on isoleucine 39.

It belongs to the short scorpion toxin superfamily. Potassium channel inhibitor family. Alpha-KTx 02 subfamily. Expressed by the venom gland.

It localises to the secreted. Functionally, blocks human voltage-gated potassium channels Kv1.2/KCNA2 (IC(50)=0.7 nM), Kv1.3/KCNA3 (IC(50)=26.2 nM) and blocks intermediate conductance calcium-activated potassium channel KCa3.1/KCNN4 (IC(50)=56 nM). The polypeptide is Potassium channel toxin alpha-KTx 2.16 (Centruroides tecomanus (Scorpion)).